Here is a 269-residue protein sequence, read N- to C-terminus: Achromobactin transport ATP-binding protein CbrD (269 aa).

Residues 4 to 240 form the ABC transporter domain; it reads ITSRELTLGY…ALVKTVFNLD (237 aa). ATP is bound at residue 36–43; sequence GSNGCGKS.

Belongs to the ABC transporter superfamily.

The protein localises to the cell inner membrane. Its function is as follows. Part of the binding-protein-dependent transport system CbrABCD for uptake of the siderophore achromobactin. Probably responsible for energy coupling to the transport system. This chain is Achromobactin transport ATP-binding protein CbrD (cbrD), found in Dickeya dadantii (strain 3937) (Erwinia chrysanthemi (strain 3937)).